The chain runs to 434 residues: Carboxy-terminal-processing protease (434 aa).

The signal sequence occupies residues 1-23 (MIRKVIFFVAGVFLSASLIVMAQ). The region spanning 86-166 (DMRDSTKGEF…TPITLTINRF (81 aa)) is the PDZ domain. Residues S294, D305, and K319 each act as charge relay system in the active site. The span at 383–392 (HIKGKQESDK) shows a compositional bias: basic and acidic residues. Residues 383-406 (HIKGKQESDKGSGSAAFVPRDPKD) are disordered.

It belongs to the peptidase S41A family. Post-translationally, may undergo autocatalytic processing at the C-terminus (398-434 or 425-434 missing).

It is found in the secreted. It catalyses the reaction The enzyme shows specific recognition of a C-terminal tripeptide, Xaa-Yaa-Zaa, in which Xaa is preferably Ala or Leu, Yaa is preferably Ala or Tyr, and Zaa is preferably Ala, but then cleaves at a variable distance from the C-terminus. A typical cleavage is -Ala-Ala-|-Arg-Ala-Ala-Lys-Glu-Asn-Tyr-Ala-Leu-Ala-Ala.. Its function is as follows. Involved in protection of the bacterium from thermal and osmotic stresses. The chain is Carboxy-terminal-processing protease (ctpA) from Bartonella bacilliformis (strain ATCC 35685 / KC583 / Herrer 020/F12,63).